Consider the following 145-residue polypeptide: uncharacterized protein (145 aa).

A helical transmembrane segment spans residues 97–117; the sequence is ISMLLLIVIIAIGLTISYMVI.

Its subcellular location is the membrane. This is an uncharacterized protein from Methanocaldococcus jannaschii (strain ATCC 43067 / DSM 2661 / JAL-1 / JCM 10045 / NBRC 100440) (Methanococcus jannaschii).